A 213-amino-acid polypeptide reads, in one-letter code: RxLR effector protein PexRD1 (213 aa).

A signal peptide spans 1 to 19 (MRACNTLLPTAIVLTSCDA). The RxLR-dEER signature appears at 50–77 (RQLRGFYATENTDPVNNQDTAHEDGEER).

Belongs to the RxLR effector family.

Its subcellular location is the secreted. It is found in the host nucleus. In terms of biological role, effector that enhances P.infestans colonization of Nicotiana benthamiana leaves. In Phytophthora infestans (strain T30-4) (Potato late blight agent), this protein is RxLR effector protein PexRD1.